A 747-amino-acid chain; its full sequence is MLIVMNRGCRLVSRIPLGFRRLKRNPNPGLRNILCRRYSPLALSKEVTEALKNNVPVVALESTIITHGMPYPQNEELAIQVESKVRSMGAVPATIALLNGQCTIGLEQFQLSELAKSGETAYKVSRRDLSYVASQRLNGGTTVAATMILARAAGIDVFATGGIGGVHRGAENSMDISADLIELGRTRVAVVSAGVKSILDIGRTLEVLETQGVPVVTLGPPKSAFPAFFSRESKFQSPLSLETPQLIANMLFSNIQLGQECGTLVAIPTPHHCSIDYEKMEALIETCLQRSVQLGITGKNVTPWLLGELLRESKGKSLNTNIDLVLNNAEKASLIAKELAVLKEKSSFFPTNTGNTFETKPVKQDFFYGKVSDKGVSSSKKKITETTSKPAEVVCVGSVSIDSVLKLDNPLTSKFLGTSHPCHSEQAFGGVAHNMALASSLMGASTKLVSCVGTKSVPTSSIKEYLTKSSLQHTIVEKSNFTSCSYTAINDCNGNLLLAGADMAIMENLSYSEIKDDLNDAKYICFDGNISPSLMLDITTSKSSKQRVVFEPTSGPKTLKILKVLSVASIDFITPNKFELDVLFQAMKDGNFFENESWWQKLNSFGITSSFYNEIERFTKSTGIEEITENGILQKCFHLLPFIKNIIVKLGPNGALLISSEKLQGVNSNSASLFTPGNVTVKYYPVPKVIATPVNASGTGDTFIGTFTALLSKGWGMDDAIDTAQKAAGLTLQCNFSVNPEIKTLLK.

Residues methionine 1–serine 379 are pseudouridine-5'-phosphate glycosidase. Catalysis depends on glutamate 61, which acts as the Proton donor; for PsiMP glycosidase activity. Residues lysine 123 and valine 143 each coordinate substrate. Mn(2+) is bound at residue aspartate 175. Serine 177–aspartate 179 is a binding site for substrate. Lysine 196 functions as the Nucleophile; for PsiMP glycosidase activity in the catalytic mechanism. Residues lysine 380–lysine 747 form a pseudouridine kinase region.

In the N-terminal section; belongs to the pseudouridine-5'-phosphate glycosidase family. It in the C-terminal section; belongs to the carbohydrate kinase PfkB family. It depends on Mn(2+) as a cofactor.

The protein resides in the cytoplasm. It catalyses the reaction D-ribose 5-phosphate + uracil = psi-UMP + H2O. The enzyme catalyses pseudouridine + ATP = psi-UMP + ADP + H(+). Bifunctional enzyme that catalyzes the phosphorylation of pseudouridine to pseudouridine 5'-phosphate (PsiMP), and the reversible cleavage of pseudouridine 5'-phosphate to ribose 5-phosphate and uracil. Is involved in a pseudouridine degradation pathway. In Schizosaccharomyces pombe (strain 972 / ATCC 24843) (Fission yeast), this protein is Pseudouridine-metabolizing bifunctional protein C1861.05.